The following is a 115-amino-acid chain: MGTRLLCWAAICLLGADHTGAGVSQSLRHKVAKKGKDVALRYDPISGHNALYWYRQSLGQGLEFPIYFQGKDAADKSGLPRDRFSAQRSEGSISTLKFQRTQQGDLAVYLCASSS.

Positions 1 to 21 (MGTRLLCWAAICLLGADHTGA) are cleaved as a signal peptide. The 94-residue stretch at 22 to 115 (GVSQSLRHKV…LAVYLCASSS (94 aa)) folds into the Ig-like domain.

As to quaternary structure, most probably, the alpha-beta TR is not assembled due to incorrect folding of the beta chain. Alpha-beta TR is a heterodimer composed of an alpha and beta chain; disulfide-linked. The alpha-beta TR is associated with the transmembrane signaling CD3 coreceptor proteins to form the TR-CD3 (TcR or TCR). The assembly of alpha-beta TR heterodimers with CD3 occurs in the endoplasmic reticulum where a single alpha-beta TR heterodimer associates with one CD3D-CD3E heterodimer, one CD3G-CD3E heterodimer and one CD247 homodimer forming a stable octameric structure. CD3D-CD3E and CD3G-CD3E heterodimers preferentially associate with TR alpha and TR beta chains, respectively. The association of the CD247 homodimer is the last step of TcR assembly in the endoplasmic reticulum and is required for transport to the cell surface.

It localises to the cell membrane. In terms of biological role, probable non-functional open reading frame (ORF) of V region of the variable domain of T cell receptor (TR) beta chain. Non-functional ORF generally cannot participate in the synthesis of a productive T cell receptor (TR) chain due to altered V-(D)-J or switch recombination and/or splicing site (at mRNA level) and/or conserved amino acid change (protein level). Alpha-beta T cell receptors are antigen specific receptors which are essential to the immune response and are present on the cell surface of T lymphocytes. Recognize peptide-major histocompatibility (MH) (pMH) complexes that are displayed by antigen presenting cells (APC), a prerequisite for efficient T cell adaptive immunity against pathogens. Binding of alpha-beta TR to pMH complex initiates TR-CD3 clustering on the cell surface and intracellular activation of LCK that phosphorylates the ITAM motifs of CD3G, CD3D, CD3E and CD247 enabling the recruitment of ZAP70. In turn ZAP70 phosphorylates LAT, which recruits numerous signaling molecules to form the LAT signalosome. The LAT signalosome propagates signal branching to three major signaling pathways, the calcium, the mitogen-activated protein kinase (MAPK) kinase and the nuclear factor NF-kappa-B (NF-kB) pathways, leading to the mobilization of transcription factors that are critical for gene expression and essential for T cell growth and differentiation. The T cell repertoire is generated in the thymus, by V-(D)-J rearrangement. This repertoire is then shaped by intrathymic selection events to generate a peripheral T cell pool of self-MH restricted, non-autoaggressive T cells. Post-thymic interaction of alpha-beta TR with the pMH complexes shapes TR structural and functional avidity. The sequence is that of Probable non-functional T cell receptor beta variable 7-1 from Homo sapiens (Human).